Here is a 334-residue protein sequence, read N- to C-terminus: Holliday junction branch migration complex subunit RuvB (334 aa).

The segment at 1-179 (MTHKISVLHQ…FAFTGRVDYY (179 aa)) is large ATPase domain (RuvB-L). ATP-binding positions include leucine 18, arginine 19, glycine 60, lysine 63, threonine 64, serine 65, 126 to 128 (EDF), arginine 169, tyrosine 179, and arginine 216. Threonine 64 contacts Mg(2+). Residues 180 to 250 (TDEDLVSILS…VAEKALAMLL (71 aa)) form a small ATPAse domain (RuvB-S) region. Positions 253-334 (NLGLNEIDIK…RNPKDRWGEE (82 aa)) are head domain (RuvB-H). Residues arginine 308 and arginine 313 each coordinate DNA.

It belongs to the RuvB family. In terms of assembly, homohexamer. Forms an RuvA(8)-RuvB(12)-Holliday junction (HJ) complex. HJ DNA is sandwiched between 2 RuvA tetramers; dsDNA enters through RuvA and exits via RuvB. An RuvB hexamer assembles on each DNA strand where it exits the tetramer. Each RuvB hexamer is contacted by two RuvA subunits (via domain III) on 2 adjacent RuvB subunits; this complex drives branch migration. In the full resolvosome a probable DNA-RuvA(4)-RuvB(12)-RuvC(2) complex forms which resolves the HJ.

The protein localises to the cytoplasm. The enzyme catalyses ATP + H2O = ADP + phosphate + H(+). Its function is as follows. The RuvA-RuvB-RuvC complex processes Holliday junction (HJ) DNA during genetic recombination and DNA repair, while the RuvA-RuvB complex plays an important role in the rescue of blocked DNA replication forks via replication fork reversal (RFR). RuvA specifically binds to HJ cruciform DNA, conferring on it an open structure. The RuvB hexamer acts as an ATP-dependent pump, pulling dsDNA into and through the RuvAB complex. RuvB forms 2 homohexamers on either side of HJ DNA bound by 1 or 2 RuvA tetramers; 4 subunits per hexamer contact DNA at a time. Coordinated motions by a converter formed by DNA-disengaged RuvB subunits stimulates ATP hydrolysis and nucleotide exchange. Immobilization of the converter enables RuvB to convert the ATP-contained energy into a lever motion, pulling 2 nucleotides of DNA out of the RuvA tetramer per ATP hydrolyzed, thus driving DNA branch migration. The RuvB motors rotate together with the DNA substrate, which together with the progressing nucleotide cycle form the mechanistic basis for DNA recombination by continuous HJ branch migration. Branch migration allows RuvC to scan DNA until it finds its consensus sequence, where it cleaves and resolves cruciform DNA. The polypeptide is Holliday junction branch migration complex subunit RuvB (Chlamydia trachomatis serovar A (strain ATCC VR-571B / DSM 19440 / HAR-13)).